Reading from the N-terminus, the 356-residue chain is tRNA N6-adenosine threonylcarbamoyltransferase (356 aa).

Fe cation is bound by residues His-115 and His-119. Residues 138 to 142 (LVSGG), Asp-171, Gly-184, and Asn-283 each bind substrate. Asp-311 serves as a coordination point for Fe cation.

The protein belongs to the KAE1 / TsaD family. Fe(2+) is required as a cofactor.

The protein localises to the cytoplasm. It carries out the reaction L-threonylcarbamoyladenylate + adenosine(37) in tRNA = N(6)-L-threonylcarbamoyladenosine(37) in tRNA + AMP + H(+). Its function is as follows. Required for the formation of a threonylcarbamoyl group on adenosine at position 37 (t(6)A37) in tRNAs that read codons beginning with adenine. Is involved in the transfer of the threonylcarbamoyl moiety of threonylcarbamoyl-AMP (TC-AMP) to the N6 group of A37, together with TsaE and TsaB. TsaD likely plays a direct catalytic role in this reaction. This is tRNA N6-adenosine threonylcarbamoyltransferase from Prochlorococcus marinus (strain MIT 9301).